The primary structure comprises 466 residues: Citrate synthase, mitochondrial (466 aa).

Residues 1–27 (MALLTAAARLLGTKNASCLVLAARHAS) constitute a mitochondrion transit peptide. Residues 2-21 (ALLTAAARLLGTKNASCLVL) carry the SIFI-degron motif. At K57 the chain carries N6-succinyllysine. At K76 the chain carries N6-acetyllysine; alternate. K76 is subject to N6-succinyllysine; alternate. N6-succinyllysine occurs at positions 103 and 193. H301 is an active-site residue. K321 and K327 each carry N6-acetyllysine; alternate. N6-succinyllysine; alternate is present on residues K321 and K327. The active site involves H347. R356 contributes to the oxaloacetate binding site. K375 carries the N6-acetyllysine; alternate modification. K375 is subject to N6-succinyllysine; alternate. An N6-acetyllysine modification is found at K382. K393 bears the N6-acetyllysine; alternate mark. N6-succinyllysine; alternate is present on K393. K395 carries the post-translational modification N6,N6,N6-trimethyllysine. The active site involves D402. Oxaloacetate is bound by residues R428 and R448. Position 450 is an N6-succinyllysine (K450). K459 is modified (N6-acetyllysine; alternate). Residue K459 is modified to N6-succinyllysine; alternate.

Belongs to the citrate synthase family. In terms of assembly, homodimer. Methylated. Trimethylation at Lys-395 by CSKMT decreases citrate synthase activity. In terms of processing, in response to mitochondrial stress, the precursor protein is ubiquitinated by the SIFI complex in the cytoplasm before mitochondrial import, leading to its degradation. Within the SIFI complex, UBR4 initiates ubiquitin chain that are further elongated or branched by KCMF1.

The protein localises to the mitochondrion matrix. The catalysed reaction is oxaloacetate + acetyl-CoA + H2O = citrate + CoA + H(+). It functions in the pathway carbohydrate metabolism; tricarboxylic acid cycle; isocitrate from oxaloacetate: step 1/2. In terms of biological role, key enzyme of the Krebs tricarboxylic acid cycle which catalyzes the synthesis of citrate from acetyl coenzyme A and oxaloacetate. This chain is Citrate synthase, mitochondrial (CS), found in Macaca fascicularis (Crab-eating macaque).